The chain runs to 260 residues: Putative ABC transporter ATP-binding protein PYRAB01300 (260 aa).

The ABC transporter domain maps to 2–234; that stretch reads IEFKDVWFWY…DLRNFSLVEP (233 aa). ATP is bound at residue 34–41; the sequence is GPNGSGKT.

It belongs to the ABC transporter superfamily.

Its subcellular location is the cell membrane. In terms of biological role, probably part of an ABC transporter complex. Responsible for energy coupling to the transport system. This Pyrococcus abyssi (strain GE5 / Orsay) protein is Putative ABC transporter ATP-binding protein PYRAB01300.